The primary structure comprises 361 residues: Alternative oxidase, mitochondrial (361 aa).

A helical transmembrane segment spans residues 156-178 (YLVRNVFLESVAGVPGMVAGMLR). Residues Glu-164, Glu-203, and His-206 each coordinate Fe cation. Residues 218–240 (WFMRLAVLGAQGVFFNAMFLSYL) form a helical membrane-spanning segment. Glu-254, Glu-309, and His-312 together coordinate Fe cation. Residues 318–328 (TLGNLDQNSDP) show a composition bias toward polar residues. Residues 318–361 (TLGNLDQNSDPNPYASKYDNPNVPHPRKDIKYLKPSGWEREEVM) are disordered. A compositionally biased stretch (basic and acidic residues) spans 343–361 (PRKDIKYLKPSGWEREEVM).

The protein belongs to the alternative oxidase family. The cofactor is Fe cation.

The protein resides in the mitochondrion inner membrane. Its function is as follows. Catalyzes cyanide-resistant oxygen consumption. May increase respiration when the cytochrome respiratory pathway is restricted, or in response to low temperatures. The sequence is that of Alternative oxidase, mitochondrial (AOX1) from Venturia inaequalis (Apple scab fungus).